The following is a 127-amino-acid chain: Large ribosomal subunit protein bL12 (127 aa).

This sequence belongs to the bacterial ribosomal protein bL12 family. As to quaternary structure, homodimer. Part of the ribosomal stalk of the 50S ribosomal subunit. Forms a multimeric L10(L12)X complex, where L10 forms an elongated spine to which 2 to 4 L12 dimers bind in a sequential fashion. Binds GTP-bound translation factors.

Functionally, forms part of the ribosomal stalk which helps the ribosome interact with GTP-bound translation factors. Is thus essential for accurate translation. In Nitratiruptor sp. (strain SB155-2), this protein is Large ribosomal subunit protein bL12.